A 146-amino-acid polypeptide reads, in one-letter code: Large ribosomal subunit protein uL15 (146 aa).

Residues 1–56 form a disordered region; the sequence is MKLHELKAAEGANKASKRVGRGTGSGLGKTSGRGQNGQNSRSGGGVRPGFEGGQMP. 2 stretches are compositionally biased toward gly residues: residues 21–35 and 42–52; these read RGTGSGLGKTSGRGQ and SGGGVRPGFEG.

It belongs to the universal ribosomal protein uL15 family. Part of the 50S ribosomal subunit.

Binds to the 23S rRNA. The protein is Large ribosomal subunit protein uL15 of Clostridium botulinum (strain ATCC 19397 / Type A).